The following is a 365-amino-acid chain: Short-chain dehydrogenase iccH (365 aa).

L16, R52, and D70 together coordinate NADP(+). Residue N90 is glycosylated (N-linked (GlcNAc...) asparagine). The NADP(+) site is built by N102, Y221, K225, and S260. Y221 functions as the Proton donor in the catalytic mechanism. K225 (lowers pKa of active site Tyr) is an active-site residue. A helical transmembrane segment spans residues 267–287 (IWVMFLLMKFVLPLLAPLAVW). N291 and N324 each carry an N-linked (GlcNAc...) asparagine glycan.

This sequence belongs to the short-chain dehydrogenases/reductases (SDR) family.

It localises to the membrane. The protein operates within mycotoxin biosynthesis. In terms of biological role, NADH-dependent flavin oxidoreductase; part of the gene cluster that mediates the biosynthesis of ilicicolin H, a 4-hydroxy-2-pyridonealkaloid that has potent and broad antifungal activities by inhibiting the mitochondrial respiration chain. IccA to iccE are sufficient for ilicicolin H biosynthesis and the roles of the remaining enzymes, iccF, iccG and iccH within the pathway have still to be determined. The biosynthesis of ilicicolin H starts with formation of the tetramic acid by the hybrid PKS-NRPS synthetase iccA with the partnering trans-enoyl reductase iccB since iccA lacks a designated enoylreductase (ER) domain. The cytochrome P450 monooxygenase iccC then catalyzes the ring expansion of the tetramate to the acyclic 2-pyridone. The pericyclase iccD further converts the acyclic 2-pyridone into 8-epi-ilicicolin H. Finally, the epimerase iccE converts 8-epi-ilicicolin H into ilicicolin H via epimerizationd. The protein is Short-chain dehydrogenase iccH of Talaromyces variabilis (Penicillium variabile).